A 137-amino-acid chain; its full sequence is Putative pre-16S rRNA nuclease (137 aa).

The protein belongs to the YqgF nuclease family.

Its subcellular location is the cytoplasm. Its function is as follows. Could be a nuclease involved in processing of the 5'-end of pre-16S rRNA. The polypeptide is Putative pre-16S rRNA nuclease (Actinobacillus pleuropneumoniae serotype 7 (strain AP76)).